Consider the following 416-residue polypeptide: Adenylosuccinate synthetase (416 aa).

GTP contacts are provided by residues 12–18 (GDEGKGK) and 40–42 (GHT). D13 functions as the Proton acceptor in the catalytic mechanism. The Mg(2+) site is built by D13 and G40. Residues 13–16 (DEGK), 38–41 (NAGH), T125, R139, Q219, T234, and R298 each bind IMP. H41 (proton donor) is an active-site residue. 294–300 (TVTGRKR) lines the substrate pocket. Residues R300, 326 to 328 (KLD), and 404 to 406 (STS) each bind GTP.

The protein belongs to the adenylosuccinate synthetase family. As to quaternary structure, homodimer. The cofactor is Mg(2+).

It localises to the cytoplasm. The catalysed reaction is IMP + L-aspartate + GTP = N(6)-(1,2-dicarboxyethyl)-AMP + GDP + phosphate + 2 H(+). It functions in the pathway purine metabolism; AMP biosynthesis via de novo pathway; AMP from IMP: step 1/2. In terms of biological role, plays an important role in the de novo pathway of purine nucleotide biosynthesis. Catalyzes the first committed step in the biosynthesis of AMP from IMP. The protein is Adenylosuccinate synthetase of Aliarcobacter butzleri (strain RM4018) (Arcobacter butzleri).